The following is a 310-amino-acid chain: D-alanyl-D-alanine endopeptidase (310 aa).

The N-terminal stretch at 1 to 25 is a signal peptide; sequence MPKFRVSLFSLALMLAVPFAPQAVA. The active-site Acyl-ester intermediate is serine 67. Catalysis depends on lysine 70, which acts as the Proton acceptor. Serine 124 is a catalytic residue. Position 231 (lysine 231) interacts with substrate.

Belongs to the peptidase S11 family. Pbp8 is a proteolytic product of Pbp7.

It is found in the periplasm. In terms of biological role, cell wall formation. May play a specialized role in remodeling the cell wall. Specifically hydrolyzes the DD-diaminopimelate-alanine bonds in high-molecular-mass murein sacculi. This chain is D-alanyl-D-alanine endopeptidase (pbpG), found in Escherichia coli (strain K12).